Reading from the N-terminus, the 179-residue chain is Large ribosomal subunit protein uL10 (179 aa).

This sequence belongs to the universal ribosomal protein uL10 family. In terms of assembly, part of the ribosomal stalk of the 50S ribosomal subunit. The N-terminus interacts with L11 and the large rRNA to form the base of the stalk. The C-terminus forms an elongated spine to which L12 dimers bind in a sequential fashion forming a multimeric L10(L12)X complex.

Forms part of the ribosomal stalk, playing a central role in the interaction of the ribosome with GTP-bound translation factors. In Thermomicrobium roseum (strain ATCC 27502 / DSM 5159 / P-2), this protein is Large ribosomal subunit protein uL10.